The chain runs to 534 residues: Protein tweety homolog 2 (534 aa).

At Met-1–Thr-44 the chain is on the extracellular side. The helical transmembrane segment at Leu-45–Gly-65 threads the bilayer. Topologically, residues Tyr-66 to Cys-87 are cytoplasmic. A helical membrane pass occupies residues Cys-88–Phe-108. Topologically, residues Tyr-109–Trp-213 are extracellular. Glu-113 and Asp-116 together coordinate Ca(2+). An N-linked (GlcNAc...) asparagine glycan is attached at Asn-129. Residues Arg-164–Asp-166 carry the RGD motif. N-linked (GlcNAc...) asparagine glycosylation is found at Asn-197 and Asn-204. The helical transmembrane segment at Leu-214–Leu-234 threads the bilayer. Residues Ala-235 to Cys-240 are Cytoplasmic-facing. Residues Leu-241–Ala-261 traverse the membrane as a helical segment. The Extracellular segment spans residues Leu-262 to Gly-388. 2 cysteine pairs are disulfide-bonded: Cys-274–Cys-382 and Cys-300–Cys-367. An N-linked (GlcNAc...) asparagine glycan is attached at Asn-352. The helical transmembrane segment at Leu-389–Ala-409 threads the bilayer. Residues Met-410–Ala-534 lie on the Cytoplasmic side of the membrane.

Belongs to the tweety family. Forms cis-homodimers in the presence of Ca(+2) and forms monomers and trans-dimers in the absence of Ca(2+).

Its subcellular location is the cell membrane. The enzyme catalyses chloride(in) = chloride(out). It carries out the reaction L-glutamate(out) = L-glutamate(in). May act as a calcium-independent, swelling-dependent volume-regulated anion channel (VRAC-swell) which plays a pivotal role in the process of regulatory volume decrease (RVD) in the brain through the efflux of anions like chloride and organic osmolytes like glutamate. Probable large-conductance Ca(2+)-activated chloride channel. The polypeptide is Protein tweety homolog 2 (ttyh2) (Xenopus laevis (African clawed frog)).